The chain runs to 243 residues: Carboxy-S-adenosyl-L-methionine synthase (243 aa).

Residues tyrosine 40, 65–67, 90–91, 118–119, asparagine 133, and arginine 200 each bind S-adenosyl-L-methionine; these read GCS, DN, and DI.

This sequence belongs to the class I-like SAM-binding methyltransferase superfamily. Cx-SAM synthase family. Homodimer.

The catalysed reaction is prephenate + S-adenosyl-L-methionine = carboxy-S-adenosyl-L-methionine + 3-phenylpyruvate + H2O. In terms of biological role, catalyzes the conversion of S-adenosyl-L-methionine (SAM) to carboxy-S-adenosyl-L-methionine (Cx-SAM). This Shewanella sp. (strain W3-18-1) protein is Carboxy-S-adenosyl-L-methionine synthase.